Reading from the N-terminus, the 39-residue chain is Cytochrome b559 subunit beta (39 aa).

Residues 14–30 traverse the membrane as a helical segment; sequence WLAVHGLAVPTVFFLGS. H18 contacts heme.

Belongs to the PsbE/PsbF family. As to quaternary structure, heterodimer of an alpha subunit and a beta subunit. PSII is composed of 1 copy each of membrane proteins PsbA, PsbB, PsbC, PsbD, PsbE, PsbF, PsbH, PsbI, PsbJ, PsbK, PsbL, PsbM, PsbT, PsbX, PsbY, PsbZ, Psb30/Ycf12, at least 3 peripheral proteins of the oxygen-evolving complex and a large number of cofactors. It forms dimeric complexes. Heme b serves as cofactor.

It is found in the plastid. Its subcellular location is the chloroplast thylakoid membrane. In terms of biological role, this b-type cytochrome is tightly associated with the reaction center of photosystem II (PSII). PSII is a light-driven water:plastoquinone oxidoreductase that uses light energy to abstract electrons from H(2)O, generating O(2) and a proton gradient subsequently used for ATP formation. It consists of a core antenna complex that captures photons, and an electron transfer chain that converts photonic excitation into a charge separation. The polypeptide is Cytochrome b559 subunit beta (Pinus koraiensis (Korean pine)).